The sequence spans 227 residues: 7-cyano-7-deazaguanine synthase (227 aa).

Residue 8-18 participates in ATP binding; that stretch reads FSGGQDSTTCL. Zn(2+) is bound by residues cysteine 187, cysteine 196, cysteine 199, and cysteine 202.

The protein belongs to the QueC family. The cofactor is Zn(2+).

The catalysed reaction is 7-carboxy-7-deazaguanine + NH4(+) + ATP = 7-cyano-7-deazaguanine + ADP + phosphate + H2O + H(+). It functions in the pathway purine metabolism; 7-cyano-7-deazaguanine biosynthesis. In terms of biological role, catalyzes the ATP-dependent conversion of 7-carboxy-7-deazaguanine (CDG) to 7-cyano-7-deazaguanine (preQ(0)). The sequence is that of 7-cyano-7-deazaguanine synthase from Aliivibrio fischeri (strain MJ11) (Vibrio fischeri).